A 93-amino-acid polypeptide reads, in one-letter code: Small ribosomal subunit protein uS19 (93 aa).

Residues 73 to 93 (EFSPTRTYRGHNKKDKKIQKK) form a disordered region. Positions 80-93 (YRGHNKKDKKIQKK) are enriched in basic residues.

It belongs to the universal ribosomal protein uS19 family.

Functionally, protein S19 forms a complex with S13 that binds strongly to the 16S ribosomal RNA. This chain is Small ribosomal subunit protein uS19 (rpsS), found in Aster yellows phytoplasma.